Consider the following 862-residue polypeptide: Aldehyde-alcohol dehydrogenase (862 aa).

Cysteine 244 is an active-site residue. 420-425 (GFWGGN) contributes to the NAD(+) binding site.

The protein in the N-terminal section; belongs to the aldehyde dehydrogenase family. It in the C-terminal section; belongs to the iron-containing alcohol dehydrogenase family.

The enzyme catalyses a primary alcohol + NAD(+) = an aldehyde + NADH + H(+). It carries out the reaction a secondary alcohol + NAD(+) = a ketone + NADH + H(+). The catalysed reaction is an aldehyde + NAD(+) + H2O = a carboxylate + NADH + 2 H(+). Functionally, has both aldehyde and alcohol dehydrogenase activities. Can use acetaldehyde, butyraldehyde, butanol and ethanol. The sequence is that of Aldehyde-alcohol dehydrogenase from Clostridium acetobutylicum (strain ATCC 824 / DSM 792 / JCM 1419 / IAM 19013 / LMG 5710 / NBRC 13948 / NRRL B-527 / VKM B-1787 / 2291 / W).